Consider the following 277-residue polypeptide: Urease accessory protein UreD (277 aa).

The protein belongs to the UreD family. In terms of assembly, ureD, UreF and UreG form a complex that acts as a GTP-hydrolysis-dependent molecular chaperone, activating the urease apoprotein by helping to assemble the nickel containing metallocenter of UreC. The UreE protein probably delivers the nickel.

Its subcellular location is the cytoplasm. In terms of biological role, required for maturation of urease via the functional incorporation of the urease nickel metallocenter. The sequence is that of Urease accessory protein UreD from Pseudomonas putida (strain W619).